Reading from the N-terminus, the 323-residue chain is tRNA N6-adenosine threonylcarbamoyltransferase (323 aa).

Residues His106, His110, and Tyr127 each contribute to the Fe cation site. Substrate contacts are provided by residues 127–131, Asp159, Gly172, Glu176, and Asn255; that span reads YVSGA. Asp283 contributes to the Fe cation binding site.

This sequence belongs to the KAE1 / TsaD family. As to quaternary structure, monomer. Component of the KEOPS complex that consists of Kae1, Bud32, Cgi121 and Pcc1; the whole complex dimerizes. Fe(2+) serves as cofactor.

The protein localises to the cytoplasm. The enzyme catalyses L-threonylcarbamoyladenylate + adenosine(37) in tRNA = N(6)-L-threonylcarbamoyladenosine(37) in tRNA + AMP + H(+). Functionally, required for the formation of a threonylcarbamoyl group on adenosine at position 37 (t(6)A37) in tRNAs that read codons beginning with adenine. Is a component of the KEOPS complex that is probably involved in the transfer of the threonylcarbamoyl moiety of threonylcarbamoyl-AMP (TC-AMP) to the N6 group of A37. Kae1 likely plays a direct catalytic role in this reaction, but requires other protein(s) of the complex to fulfill this activity. This is tRNA N6-adenosine threonylcarbamoyltransferase from Methanocella arvoryzae (strain DSM 22066 / NBRC 105507 / MRE50).